Reading from the N-terminus, the 190-residue chain is Ribose 1,5-bisphosphate phosphokinase PhnN (190 aa).

11–18 (GPSGSGKD) contributes to the ATP binding site.

It belongs to the ribose 1,5-bisphosphokinase family.

It carries out the reaction alpha-D-ribose 1,5-bisphosphate + ATP = 5-phospho-alpha-D-ribose 1-diphosphate + ADP. The protein operates within metabolic intermediate biosynthesis; 5-phospho-alpha-D-ribose 1-diphosphate biosynthesis; 5-phospho-alpha-D-ribose 1-diphosphate from D-ribose 5-phosphate (route II): step 3/3. Functionally, catalyzes the phosphorylation of ribose 1,5-bisphosphate to 5-phospho-D-ribosyl alpha-1-diphosphate (PRPP). The protein is Ribose 1,5-bisphosphate phosphokinase PhnN of Thiobacillus denitrificans (strain ATCC 25259 / T1).